A 281-amino-acid chain; its full sequence is Ras-related protein Rab-40C (281 aa).

GTP is bound by residues S23, G26, K27, and S46. The segment at 41 to 49 (SPYAYSNGI) is switch-I. Mg(2+)-binding residues include S46 and D69. Residues G72, N126, and R127 each coordinate GTP. A switch-II region spans residues 72 to 88 (GQGRFCTIFRSYSRGAQ). The SOCS box domain maps to 175–228 (LMRHGMEKIWRPNRVFSLQDLCCRAIVSCTPVHLIDKLPLPVTIKSHLKSFSMA). A disordered region spans residues 245–281 (SGAGGSGSKGNSLKRSKSIRPPQSPPQNCSRSNCKIS). Positions 270–281 (PQNCSRSNCKIS) are enriched in polar residues. A lipid anchor (S-palmitoyl cysteine) is attached at C273. The S-geranylgeranyl cysteine moiety is linked to residue C278.

Belongs to the small GTPase superfamily. Rab family. In terms of assembly, component of the cullin-5-RING E3 ubiquitin-protein ligase complex (ECS(RAB40C) complex) composed of CUL5, Elongin BC (ELOB and ELOC), RNF7/RBX2 and RAB40C. Interacts with protein phosphatase 6 (PP6) complex components ANKRD28, ANKRD52, PPP6C, PP6R1 and PP6R2; the interaction leads to ANKRD28 ubiquitination and decreased PP6 activity. Interacts with DAB2IP; DAB2IP acts as a GAP for RAB40C. The cofactor is Mg(2+).

The protein localises to the cell membrane. It localises to the cytoplasm. Its subcellular location is the cytosol. The protein resides in the golgi apparatus membrane. The catalysed reaction is GTP + H2O = GDP + phosphate + H(+). The protein operates within protein modification; protein ubiquitination. Regulated by guanine nucleotide exchange factors (GEFs) which promote the exchange of bound GDP for free GTP. Regulated by GTPase activating proteins (GAPs) including DAB2IP, which increase the GTP hydrolysis activity. Inhibited by GDP dissociation inhibitors (GDIs). Its function is as follows. RAB40C small GTPase acts as substrate-recognition component of the ECS(RAB40C) E3 ubiquitin ligase complex which mediates the ubiquitination and subsequent proteasomal degradation of target proteins. The Rab40 subfamily belongs to the Rab family that are key regulators of intracellular membrane trafficking, from the formation of transport vesicles to their fusion with membranes. Rabs cycle between an inactive GDP-bound form and an active GTP-bound form that is able to recruit to membranes different sets of downstream effectors directly responsible for vesicle formation, movement, tethering and fusion. As part of the ECS(RAB40C) complex, mediates ANKRD28 ubiquitination and degradation, thereby inhibiting protein phosphatase 6 (PP6) complex activity and focal adhesion assembly during cell migration. Also negatively regulate lipid droplets accumulation in a GTP-dependent manner. In Mus musculus (Mouse), this protein is Ras-related protein Rab-40C.